Reading from the N-terminus, the 231-residue chain is Ribonuclease HI (231 aa).

An RNase H type-1 domain is found at 1 to 146 (MRERAVAACD…ADRAASQAAV (146 aa)). Mg(2+)-binding residues include D10, E50, D72, and D138. Low complexity-rich tracts occupy residues 148–157 (QEAAGSALGS) and 166–181 (VPAARRAPRRGSSGAA). 2 disordered regions span residues 148 to 192 (QEAA…SART) and 212 to 231 (PIAKNDQGWGHPECRTVAAG).

Belongs to the RNase H family. As to quaternary structure, monomer. Mg(2+) serves as cofactor.

It is found in the cytoplasm. It carries out the reaction Endonucleolytic cleavage to 5'-phosphomonoester.. Functionally, endonuclease that specifically degrades the RNA of RNA-DNA hybrids. The sequence is that of Ribonuclease HI (rnhA) from Streptomyces coelicolor (strain ATCC BAA-471 / A3(2) / M145).